Consider the following 327-residue polypeptide: tRNA pseudouridine synthase B (327 aa).

Catalysis depends on Asp-69, which acts as the Nucleophile. Positions 97, 201, and 222 each coordinate substrate.

Belongs to the pseudouridine synthase TruB family. Type 1 subfamily.

It carries out the reaction uridine(55) in tRNA = pseudouridine(55) in tRNA. In terms of biological role, responsible for synthesis of pseudouridine from uracil-55 in the psi GC loop of transfer RNAs. In Wigglesworthia glossinidia brevipalpis, this protein is tRNA pseudouridine synthase B.